Consider the following 84-residue polypeptide: Small ribosomal subunit protein uS15 (84 aa).

This sequence belongs to the universal ribosomal protein uS15 family. In terms of assembly, part of the 30S ribosomal subunit. Forms a bridge to the 50S subunit in the 70S ribosome, contacting the 23S rRNA.

One of the primary rRNA binding proteins, it binds directly to 16S rRNA where it helps nucleate assembly of the platform of the 30S subunit by binding and bridging several RNA helices of the 16S rRNA. Its function is as follows. Forms an intersubunit bridge (bridge B4) with the 23S rRNA of the 50S subunit in the ribosome. The polypeptide is Small ribosomal subunit protein uS15 (Thermosipho melanesiensis (strain DSM 12029 / CIP 104789 / BI429)).